A 255-amino-acid polypeptide reads, in one-letter code: NADPH-dependent FMN reductase ArsH (255 aa).

Residue 43-50 (SLRARSFS) coordinates FMN.

The protein belongs to the ArsH family. In terms of assembly, homotetramer. The cofactor is FMN.

Has NADPH-dependent FMN reductase activity and very low azoreductase activity. No activity with NADH. This Shigella flexneri protein is NADPH-dependent FMN reductase ArsH.